A 374-amino-acid chain; its full sequence is MADGIDRNADEKMEFSTSKEVTVAPTFEAMHLKENLLRGIYAYGYESPSAVQSRAIVQVCKGRDTIAQAQSGTGKTATFSISILQSVIMGLGDYMNVQCHACIGGTNVGEDIRKLDYGQHVVSGTPGRVADMIRRRNLRTRNIKMLVLDEADELLNRGFREQIYDVYRYLPPATQVVVVSATLPYDVLEMTTKFMTDPVRILVKRDELTLEGLKQYFIAIEKEEWKFDTLCDLYDTLTITQAVIFCNTRRKVDWLTDKMREANFTVSSMHGDMPQRERDSIMQDFRQANSRVLISTDVWARGIDVQQVSLVINYDLPSNRENYIHRIGRSGRFGRKGVAINFVTQEDVRILRDIELYYSTQIDEMPMNVADLLA.

Residues 25 to 53 (PTFEAMHLKENLLRGIYAYGYESPSAVQS) carry the Q motif motif. A Helicase ATP-binding domain is found at 56–201 (IVQVCKGRDT…TKFMTDPVRI (146 aa)). 69-76 (AQSGTGKT) contacts ATP. Positions 149-152 (DEAD) match the DEAD box motif. The Helicase C-terminal domain maps to 212-373 (GLKQYFIAIE…EMPMNVADLL (162 aa)).

This sequence belongs to the DEAD box helicase family. DDX48/FAL1 subfamily.

Its subcellular location is the nucleus. The protein localises to the nucleolus. It catalyses the reaction ATP + H2O = ADP + phosphate + H(+). Its function is as follows. ATP-dependent RNA helicase involved in 40S ribosomal subunit biogenesis. Required for the processing and cleavage of 35S pre-rRNA at sites A0, A1, and A2, leading to mature 18S rRNA. In Phaeosphaeria nodorum (strain SN15 / ATCC MYA-4574 / FGSC 10173) (Glume blotch fungus), this protein is ATP-dependent RNA helicase FAL1 (FAL1).